A 203-amino-acid chain; its full sequence is Octanoyltransferase (203 aa).

Residues 32 to 203 (ISTPDEIWLV…LMHKIREIFS (172 aa)) enclose the BPL/LPL catalytic domain. Substrate-binding positions include 71 to 78 (RGGKITYH), 138 to 140 (SLG), and 151 to 153 (GMA). Cysteine 169 (acyl-thioester intermediate) is an active-site residue.

The protein belongs to the LipB family.

The protein resides in the cytoplasm. It catalyses the reaction octanoyl-[ACP] + L-lysyl-[protein] = N(6)-octanoyl-L-lysyl-[protein] + holo-[ACP] + H(+). It participates in protein modification; protein lipoylation via endogenous pathway; protein N(6)-(lipoyl)lysine from octanoyl-[acyl-carrier-protein]: step 1/2. In terms of biological role, catalyzes the transfer of endogenously produced octanoic acid from octanoyl-acyl-carrier-protein onto the lipoyl domains of lipoate-dependent enzymes. Lipoyl-ACP can also act as a substrate although octanoyl-ACP is likely to be the physiological substrate. The protein is Octanoyltransferase of Buchnera aphidicola subsp. Baizongia pistaciae (strain Bp).